The sequence spans 351 residues: MAKKLLVMAGGTGGHVFPAIAVARELQKQGWEIRWLGTKDRMEADLVPKHGIPIEFIQISGLKGKGIGALLKAPFAIFKAVMQARKIIKNYQPDAVLGMGGYVSGPGGIAAKLCGVPVILHEQNAVAGLTNVWLSKIARRVLQAFPTAFPNAEVVGNPVREDLAQLEAPEIRFAERGYPINILVMGGSQGARVINQTVPEVAKQLGNNVFISHQVGKGNLGGVEEIYQATGNGIAAEFIDDMAQAYSWADLVICRSGALTVCEIAAAGLPAIFVPYQHKDRQQYLNATYLADGGAAIIIEQQDFTPQTLLNVLQPLIADRRKLTEMAVKARAKATPTAAQRVAEVIIEQAK.

UDP-N-acetyl-alpha-D-glucosamine contacts are provided by residues 12 to 14 (TGG), Asn124, Arg160, Ser188, Ile239, 258 to 263 (ALTVCE), and Gln283.

The protein belongs to the glycosyltransferase 28 family. MurG subfamily.

It localises to the cell inner membrane. It carries out the reaction di-trans,octa-cis-undecaprenyl diphospho-N-acetyl-alpha-D-muramoyl-L-alanyl-D-glutamyl-meso-2,6-diaminopimeloyl-D-alanyl-D-alanine + UDP-N-acetyl-alpha-D-glucosamine = di-trans,octa-cis-undecaprenyl diphospho-[N-acetyl-alpha-D-glucosaminyl-(1-&gt;4)]-N-acetyl-alpha-D-muramoyl-L-alanyl-D-glutamyl-meso-2,6-diaminopimeloyl-D-alanyl-D-alanine + UDP + H(+). It functions in the pathway cell wall biogenesis; peptidoglycan biosynthesis. Its function is as follows. Cell wall formation. Catalyzes the transfer of a GlcNAc subunit on undecaprenyl-pyrophosphoryl-MurNAc-pentapeptide (lipid intermediate I) to form undecaprenyl-pyrophosphoryl-MurNAc-(pentapeptide)GlcNAc (lipid intermediate II). The polypeptide is UDP-N-acetylglucosamine--N-acetylmuramyl-(pentapeptide) pyrophosphoryl-undecaprenol N-acetylglucosamine transferase (Actinobacillus pleuropneumoniae serotype 5b (strain L20)).